The sequence spans 241 residues: Synaptogyrin (241 aa).

One can recognise an MARVEL domain in the interval phenylalanine 30–leucine 179. 4 helical membrane-spanning segments follow: residues proline 34 to serine 54, methionine 81 to glutamate 101, alanine 115 to tryptophan 135, and threonine 155 to tyrosine 175. Residues alanine 216–tyrosine 241 form a disordered region. Over residues glycine 220 to tyrosine 241 the composition is skewed to low complexity.

Belongs to the synaptogyrin family.

It localises to the cytoplasmic vesicle membrane. It is found in the cytoplasmic vesicle. Its subcellular location is the secretory vesicle membrane. The protein localises to the secretory vesicle. The protein resides in the synaptic vesicle membrane. Functionally, required for the correct formation of synaptic vesicles at nerve terminals and has a role in the regulation of the synaptic vesicle exo-endocytic cycle. The sequence is that of Synaptogyrin from Drosophila melanogaster (Fruit fly).